A 220-amino-acid polypeptide reads, in one-letter code: Putative 3-methyladenine DNA glycosylase (220 aa).

The protein belongs to the DNA glycosylase MPG family.

The polypeptide is Putative 3-methyladenine DNA glycosylase (Rickettsia bellii (strain RML369-C)).